Here is a 251-residue protein sequence, read N- to C-terminus: Hydroxyacylglutathione hydrolase (251 aa).

Zn(2+)-binding residues include H53, H55, D57, H58, H110, D127, and H165.

It belongs to the metallo-beta-lactamase superfamily. Glyoxalase II family. Monomer. Requires Zn(2+) as cofactor.

It carries out the reaction an S-(2-hydroxyacyl)glutathione + H2O = a 2-hydroxy carboxylate + glutathione + H(+). It functions in the pathway secondary metabolite metabolism; methylglyoxal degradation; (R)-lactate from methylglyoxal: step 2/2. In terms of biological role, thiolesterase that catalyzes the hydrolysis of S-D-lactoyl-glutathione to form glutathione and D-lactic acid. The protein is Hydroxyacylglutathione hydrolase of Salmonella typhi.